A 263-amino-acid chain; its full sequence is Granzyme K (263 aa).

An N-terminal signal peptide occupies residues 1-21; that stretch reads MRFSSWALVSLVAGVYMSSEC. The propeptide at 22-25 is activation peptide; the sequence is FHTE. Residues 26-258 form the Peptidase S1 domain; the sequence is IIGGREVQPH…YQTWIKSKLA (233 aa). Cysteines 51 and 67 form a disulfide. Catalysis depends on charge relay system residues His-66 and Asp-115. 3 disulfide bridges follow: Cys-148–Cys-219, Cys-180–Cys-198, and Cys-209–Cys-233. Catalysis depends on Ser-213, which acts as the Charge relay system.

It belongs to the peptidase S1 family. Granzyme subfamily.

The protein resides in the cytoplasmic granule. In Mus musculus (Mouse), this protein is Granzyme K (Gzmk).